We begin with the raw amino-acid sequence, 87 residues long: Small ribosomal subunit protein bS16 (87 aa).

This sequence belongs to the bacterial ribosomal protein bS16 family.

The protein is Small ribosomal subunit protein bS16 of Desulfatibacillum aliphaticivorans.